A 164-amino-acid polypeptide reads, in one-letter code: uncharacterized protein (164 aa).

Residues 1-77 (MGQKKTMGTE…PCSIRDAPFH (77 aa)) form a disordered region.

This is an uncharacterized protein from Homo sapiens (Human).